The sequence spans 292 residues: Protein/nucleic acid deglycase HchA (292 aa).

A compositionally biased stretch (polar residues) spans 1–12 (MSQDVNKLSKQP). Positions 1 to 23 (MSQDVNKLSKQPTPDKAEDNAFF) are disordered. Cysteine 190 serves as the catalytic Nucleophile.

The protein belongs to the peptidase C56 family. HchA subfamily.

Its subcellular location is the cytoplasm. It catalyses the reaction N(omega)-(1-hydroxy-2-oxopropyl)-L-arginyl-[protein] + H2O = lactate + L-arginyl-[protein] + H(+). It carries out the reaction N(6)-(1-hydroxy-2-oxopropyl)-L-lysyl-[protein] + H2O = lactate + L-lysyl-[protein] + H(+). The catalysed reaction is S-(1-hydroxy-2-oxopropyl)-L-cysteinyl-[protein] + H2O = lactate + L-cysteinyl-[protein] + H(+). The enzyme catalyses N(omega)-(1-hydroxy-2-oxoethyl)-L-arginyl-[protein] + H2O = L-arginyl-[protein] + glycolate + H(+). It catalyses the reaction N(6)-(1-hydroxy-2-oxoethyl)-L-lysyl-[protein] + H2O = glycolate + L-lysyl-[protein] + H(+). It carries out the reaction S-(1-hydroxy-2-oxoethyl)-L-cysteinyl-[protein] + H2O = glycolate + L-cysteinyl-[protein] + H(+). The catalysed reaction is N(2)-(1-hydroxy-2-oxopropyl)-dGTP + H2O = lactate + dGTP + H(+). The enzyme catalyses N(2)-(1-hydroxy-2-oxopropyl)-GTP + H2O = lactate + GTP + H(+). It catalyses the reaction N(2)-(1-hydroxy-2-oxopropyl)-GDP + H2O = lactate + GDP + H(+). It carries out the reaction N(2)-(1-hydroxy-2-oxopropyl)-GMP + H2O = lactate + GMP + H(+). The catalysed reaction is N(2)-(1-hydroxy-2-oxoethyl)-dGTP + H2O = dGTP + glycolate + H(+). The enzyme catalyses N(2)-(1-hydroxy-2-oxoethyl)-GTP + H2O = glycolate + GTP + H(+). It catalyses the reaction N(2)-(1-hydroxy-2-oxoethyl)-GDP + H2O = glycolate + GDP + H(+). It carries out the reaction N(2)-(1-hydroxy-2-oxoethyl)-GMP + H2O = glycolate + GMP + H(+). The catalysed reaction is an N(2)-(1-hydroxy-2-oxopropyl)-guanosine in RNA + H2O = a guanosine in RNA + lactate + H(+). The enzyme catalyses an N(2)-(1-hydroxy-2-oxopropyl)-2'-deoxyguanosine in DNA + H2O = a 2'-deoxyguanosine in DNA + lactate + H(+). It catalyses the reaction an N(2)-(1-hydroxy-2-oxoethyl)-guanosine in RNA + H2O = a guanosine in RNA + glycolate + H(+). It carries out the reaction an N(2)-(1-hydroxy-2-oxoethyl)-2'-deoxyguanosine in DNA + H2O = a 2'-deoxyguanosine in DNA + glycolate + H(+). In terms of biological role, protein and nucleotide deglycase that catalyzes the deglycation of the Maillard adducts formed between amino groups of proteins or nucleotides and reactive carbonyl groups of glyoxals. Thus, functions as a protein deglycase that repairs methylglyoxal- and glyoxal-glycated proteins, and releases repaired proteins and lactate or glycolate, respectively. Deglycates cysteine, arginine and lysine residues in proteins, and thus reactivates these proteins by reversing glycation by glyoxals. Acts on early glycation intermediates (hemithioacetals and aminocarbinols), preventing the formation of Schiff bases and advanced glycation endproducts (AGE). Also functions as a nucleotide deglycase able to repair glycated guanine in the free nucleotide pool (GTP, GDP, GMP, dGTP) and in DNA and RNA. Is thus involved in a major nucleotide repair system named guanine glycation repair (GG repair), dedicated to reversing methylglyoxal and glyoxal damage via nucleotide sanitization and direct nucleic acid repair. Plays an important role in protecting cells from carbonyl stress. This chain is Protein/nucleic acid deglycase HchA, found in Staphylococcus aureus (strain MRSA252).